The sequence spans 554 residues: MMLSRAKPAVGGESPHTDKRKKKGRKIPKLEDLLSQRDFTGAITLLEFKRHVGEQEDDTNLWIGYCAFHLGDYKRALEEYENATKEENCNPEVWVNLACTYFFLGMYKQAEAAGFKAPKSRLQNRLLFHLAHKFNDEKKLMNFHQNLQDIKEDQLSLASIHYMRSHYQEAIDIYKRILLDNREYLALNVYVALCYYKLDYYDVSQEVLAVYLQQIPDSTIALNLKACNHFRLYNGKAAEAELKSLMDNASSPFEFAKELIRHNLVVFRGGEGALQVLPPLVDVIPEARLNLVIYYLRQDDVQEAYNLIKDLEPTTPQEYILKGVVNAALGQEMGSRDHMKIAQQFFQLVGGSASECDTIPGRQCMASCFFLLKQFDDVLIYLNSFKSYFYNDDIFNFNYAQAKAATGNTSEGEEVFLLIQSEKLKNDYIYLSWLARCYIMNKKPRLAWELYLKMETSGESFSLLQLIANDCYKMGQFYYSAKAFDVLERLDPNPEYWEGKRGACVGIFQMILAGREPKETLREVLHLLRSTGNTQVEYIIRIMKKWAKENRVPI.

The segment at 1–27 (MMLSRAKPAVGGESPHTDKRKKKGRKI) is disordered. The span at 18–27 (DKRKKKGRKI) shows a compositional bias: basic residues. 4 TPR repeats span residues 57-90 (DDTN…ENCN), 92-125 (EVWV…LQNR), 151-184 (KEDQ…NREY), and 468-501 (ANDC…EGKR).

The protein belongs to the IFT56 family. Component of the IFT complex B. Interacts with IFT46; the interaction is direct. High expression detected in testis. Detected also retina, kidney, lung and brain tissue. The expression level is low in spleen. Expressed in the developing liver. Present in the airway epithelial cells and the testes (at protein level).

The protein resides in the cell projection. Its subcellular location is the cilium. In terms of biological role, component of the intraflagellar transport (IFT) complex B required for transport of proteins in the motile cilium. Required for transport of specific ciliary cargo proteins related to motility, while it is neither required for IFT complex B assembly or motion nor for cilium assembly. Required for efficient coupling between the accumulation of GLI2 and GLI3 at the ciliary tips and their dissociation from the negative regulator SUFU. Plays a key role in maintaining the integrity of the IFT complex B and the proper ciliary localization of the IFT complex B components. Not required for IFT complex A ciliary localization or function. Essential for maintaining proper microtubule organization within the ciliary axoneme. The protein is Intraflagellar transport protein 56 of Mus musculus (Mouse).